A 495-amino-acid chain; its full sequence is N-succinylglutamate 5-semialdehyde dehydrogenase (495 aa).

Gly-220–Gly-225 lines the NAD(+) pocket. Active-site residues include Glu-243 and Cys-277.

The protein belongs to the aldehyde dehydrogenase family. AstD subfamily.

It carries out the reaction N-succinyl-L-glutamate 5-semialdehyde + NAD(+) + H2O = N-succinyl-L-glutamate + NADH + 2 H(+). It participates in amino-acid degradation; L-arginine degradation via AST pathway; L-glutamate and succinate from L-arginine: step 4/5. In terms of biological role, catalyzes the NAD-dependent reduction of succinylglutamate semialdehyde into succinylglutamate. This chain is N-succinylglutamate 5-semialdehyde dehydrogenase, found in Enterobacter sp. (strain 638).